The chain runs to 234 residues: NAD-dependent protein deacylase (234 aa).

Positions 1–234 (MKNLVILSGA…IEMASQEMLK (234 aa)) constitute a Deacetylase sirtuin-type domain. Residue 9 to 28 (GAGISAESGIKTFRDAGGLW) coordinates NAD(+). 2 residues coordinate substrate: Tyr-53 and Arg-56. NAD(+) is bound at residue 86–89 (QNVD). His-104 functions as the Proton acceptor in the catalytic mechanism. Residues 169 to 171 (GTS) and Met-217 contribute to the NAD(+) site.

It belongs to the sirtuin family. Class III subfamily.

It is found in the cytoplasm. The catalysed reaction is N(6)-acetyl-L-lysyl-[protein] + NAD(+) + H2O = 2''-O-acetyl-ADP-D-ribose + nicotinamide + L-lysyl-[protein]. It catalyses the reaction N(6)-succinyl-L-lysyl-[protein] + NAD(+) + H2O = 2''-O-succinyl-ADP-D-ribose + nicotinamide + L-lysyl-[protein]. Functionally, NAD-dependent lysine deacetylase and desuccinylase that specifically removes acetyl and succinyl groups on target proteins. Modulates the activities of several proteins which are inactive in their acylated form. The protein is NAD-dependent protein deacylase of Helicobacter pylori (strain J99 / ATCC 700824) (Campylobacter pylori J99).